A 218-amino-acid chain; its full sequence is Cytidylate kinase (218 aa).

11-19 provides a ligand contact to ATP; that stretch reads GPSGVGKST.

It belongs to the cytidylate kinase family. Type 1 subfamily.

Its subcellular location is the cytoplasm. The enzyme catalyses CMP + ATP = CDP + ADP. It carries out the reaction dCMP + ATP = dCDP + ADP. The protein is Cytidylate kinase of Mycoplasmopsis synoviae (strain 53) (Mycoplasma synoviae).